Consider the following 255-residue polypeptide: Ribosomal RNA small subunit methyltransferase A (255 aa).

Residues Asn13, Leu15, Gly40, Glu61, Asp85, and Asn103 each contribute to the S-adenosyl-L-methionine site.

This sequence belongs to the class I-like SAM-binding methyltransferase superfamily. rRNA adenine N(6)-methyltransferase family. RsmA subfamily.

The protein localises to the cytoplasm. It carries out the reaction adenosine(1518)/adenosine(1519) in 16S rRNA + 4 S-adenosyl-L-methionine = N(6)-dimethyladenosine(1518)/N(6)-dimethyladenosine(1519) in 16S rRNA + 4 S-adenosyl-L-homocysteine + 4 H(+). Functionally, specifically dimethylates two adjacent adenosines (A1518 and A1519) in the loop of a conserved hairpin near the 3'-end of 16S rRNA in the 30S particle. May play a critical role in biogenesis of 30S subunits. This is Ribosomal RNA small subunit methyltransferase A from Dechloromonas aromatica (strain RCB).